A 94-amino-acid polypeptide reads, in one-letter code: Small ribosomal subunit protein uS19 (94 aa).

It belongs to the universal ribosomal protein uS19 family.

In terms of biological role, protein S19 forms a complex with S13 that binds strongly to the 16S ribosomal RNA. The protein is Small ribosomal subunit protein uS19 of Dictyoglomus thermophilum (strain ATCC 35947 / DSM 3960 / H-6-12).